A 1603-amino-acid chain; its full sequence is Protein TIC 214 (1603 aa).

Transmembrane regions (helical) follow at residues 11–31 (VLWA…LFGL), 58–78 (LSGT…FLSI), 86–106 (LLLK…FYWY), 131–151 (IFFD…SPIL), 167–187 (LFVL…FNCI), and 213–233 (FSIF…VPFF).

It belongs to the TIC214 family. As to quaternary structure, part of the Tic complex.

It is found in the plastid. The protein localises to the chloroplast inner membrane. Functionally, involved in protein precursor import into chloroplasts. May be part of an intermediate translocation complex acting as a protein-conducting channel at the inner envelope. The sequence is that of Protein TIC 214 from Physcomitrium patens (Spreading-leaved earth moss).